Here is a 169-residue protein sequence, read N- to C-terminus: Phosphopantetheine adenylyltransferase (169 aa).

Threonine 14 is a binding site for substrate. ATP-binding positions include 14 to 15 and histidine 22; that span reads TF. Positions 46, 78, and 92 each coordinate substrate. ATP contacts are provided by residues 93–95, glutamate 103, and 128–134; these read GLR and HSFISSS.

The protein belongs to the bacterial CoaD family. As to quaternary structure, homohexamer. Mg(2+) is required as a cofactor.

It localises to the cytoplasm. It carries out the reaction (R)-4'-phosphopantetheine + ATP + H(+) = 3'-dephospho-CoA + diphosphate. Its pathway is cofactor biosynthesis; coenzyme A biosynthesis; CoA from (R)-pantothenate: step 4/5. Functionally, reversibly transfers an adenylyl group from ATP to 4'-phosphopantetheine, yielding dephospho-CoA (dPCoA) and pyrophosphate. This is Phosphopantetheine adenylyltransferase from Stenotrophomonas maltophilia (strain R551-3).